Here is a 128-residue protein sequence, read N- to C-terminus: Large ribosomal subunit protein bL17 (128 aa).

Belongs to the bacterial ribosomal protein bL17 family. As to quaternary structure, part of the 50S ribosomal subunit. Contacts protein L32.

This chain is Large ribosomal subunit protein bL17, found in Streptococcus thermophilus (strain ATCC BAA-250 / LMG 18311).